Consider the following 921-residue polypeptide: Translation initiation factor IF-2 (921 aa).

3 disordered regions span residues 81 to 118, 175 to 194, and 219 to 301; these read AVAE…AAAP, PVVE…ANQA, and VAPA…KKHE. Residues 96–112 are compositionally biased toward pro residues; it reads PAAPTPPEVPAAAPAPP. The span at 229 to 241 shows a compositional bias: low complexity; sequence RPSPAAGAPSRGA. Basic and acidic residues predominate over residues 292–301; that stretch reads KKKEQPKKHE. A tr-type G domain is found at 421 to 590; that stretch reads KRPPVVTIMG…LLQADLMELK (170 aa). The interval 430–437 is G1; the sequence is GHVDHGKT. 430–437 is a binding site for GTP; it reads GHVDHGKT. The G2 stretch occupies residues 455 to 459; sequence GITQH. The segment at 476–479 is G3; it reads DTPG. GTP is bound by residues 476–480 and 530–533; these read DTPGH and NKID. The G4 stretch occupies residues 530 to 533; sequence NKID. Residues 566-568 form a G5 region; that stretch reads SAK.

Belongs to the TRAFAC class translation factor GTPase superfamily. Classic translation factor GTPase family. IF-2 subfamily.

Its subcellular location is the cytoplasm. One of the essential components for the initiation of protein synthesis. Protects formylmethionyl-tRNA from spontaneous hydrolysis and promotes its binding to the 30S ribosomal subunits. Also involved in the hydrolysis of GTP during the formation of the 70S ribosomal complex. The polypeptide is Translation initiation factor IF-2 (Pelobacter propionicus (strain DSM 2379 / NBRC 103807 / OttBd1)).